Consider the following 1125-residue polypeptide: Transient receptor potential cation channel subfamily A member 1 (1125 aa).

Topologically, residues 1-721 are cytoplasmic; sequence MKRGLRRILL…KWCAYGFRAH (721 aa). ANK repeat units lie at residues 63-94, 98-127, 131-161, 165-194, 198-227, 239-268, 272-301, 309-338, and 342-371; these read ENLCPLHHAAAEGQVELMELIINGSSCEVLNI, YGNTPLHCAAEKNQVESVKFLLSQGANPNL, NMMSPLHIAVHGMYNEVIKVLTEHKATNINL, NGNTALMSTCAKDNSEALQILLEKGAKLCK, WGDYPVHQAAFSGAKKCMELILAYGEKNGY, KKASPLHLAVQSGDLDMIKMCLDNGAHIDM, AKCMALHFAATQGATDIVKLMISSYTGSSD, NQETLLHRASLFDHHDLAEYLISVGADINS, and EGRSPLILATASASWNIVNLLLCKGAKVDI. 5 cysteine pairs are disulfide-bonded: cysteine 193–cysteine 666, cysteine 463–cysteine 666, cysteine 609–cysteine 622, cysteine 622–cysteine 666, and cysteine 634–cysteine 859. Proline 395 is subject to 4-hydroxyproline; transient. ANK repeat units follow at residues 413 to 442, 446 to 475, 482 to 511, 514 to 543, and 548 to 577; these read DGCTPLHYACRQGVPVSVNNLLGFNVSIHS, DKKSPLHFAASYGRINTCQRLLQDISDTRL, HGMTPLHLAAKNGHDKVVQLLLKKGALFLS, NGWTALHHASMGGYTQTMKVILDTNLKCTD, and EGNTALHFAAREGHAKAVAMLLSYNADILL. The (E)-cinnamaldehyde site is built by cysteine 415 and cysteine 422. Cysteine 622 contacts (E)-cinnamaldehyde. Cysteine 634 is modified (cysteine sulfenic acid (-SOH); transient; in hyperoxia). Residues cysteine 642, cysteine 666, and lysine 712 each coordinate (E)-cinnamaldehyde. The helical transmembrane segment at 722 to 742 threads the bilayer; the sequence is MMNLGSYCLGLIPMTLLVVKI. The Extracellular portion of the chain corresponds to 743–767; the sequence is QPGMAFNSTGIINGTSSTHEERIDT. N-linked (GlcNAc...) asparagine glycans are attached at residues asparagine 749 and asparagine 755. A helical transmembrane segment spans residues 768-788; that stretch reads LNSFPIKICMILVFLSSIFGY. The Cytoplasmic portion of the chain corresponds to 789 to 806; the sequence is CKEVIQIFQQKRNYFLDY. Positions 791, 794, 808, and 811 each coordinate Ca(2+). A helical transmembrane segment spans residues 807 to 827; it reads NNALEWVIYTTSIIFVLPLFL. Topologically, residues 828 to 832 are extracellular; that stretch reads NIPAY. A helical membrane pass occupies residues 833 to 853; that stretch reads MQWQCGAIAIFFYWMNFLLYL. The Cytoplasmic segment spans residues 854 to 876; it reads QRFENCGIFIVMLEVIFKTLLRS. The residue at position 859 (cysteine 859) is a Cysteine sulfenic acid (-SOH); transient; in hyperoxia. The chain crosses the membrane as a helical span at residues 877-897; it reads TGVFIFLLLAFGLSFYVLLNF. At 898-904 the chain is on the extracellular side; the sequence is QDAFSTP. Positions 905–925 form an intramembrane region, pore-forming; sequence LLSLIQTFSMMLGDINYRDAF. The Extracellular segment spans residues 926-937; the sequence is LEPLFRNELAYP. The chain crosses the membrane as a helical span at residues 938–959; the sequence is VLTFGQLIAFTMFVPIVLMNLL. Topologically, residues 960–1125 are cytoplasmic; the sequence is IGLAVGDIAE…THCSISHPDF (166 aa). A coiled-coil region spans residues 1044–1073; it reads MEILKQKYRLKDLTSLLEKQHELIKLIIQK. Residue 1048-1054 coordinates a 1,2-diacyl-sn-glycero-3-phospho-(1D-myo-inositol); that stretch reads KQKYRLK.

Belongs to the transient receptor (TC 1.A.4) family. In terms of assembly, homotetramer. Interacts with TMEM100. Interacts with EGLN1. Interacts with the scorpion wasabi receptor toxin at the same site that electrophiles but in a non-covalent manner. In terms of processing, TRPA1 activation by electrophiles occurs though covalent modification of specific cysteine residues in the N-terminal cytoplasmic domain. Hydroxylation is required for TRPA1 activity inhibition in normoxia. In hypoxia, the decrease in oxygen concentration diminishes the activity of the hydroxylase EGLN1, thus relieving TRPA1 from inhibition and ultimately leading to channel activation. Post-translationally, oxidation of Cys-634 and Cys-859 in hyperoxia may override the hydroxylase EGLN1-mediated inhibition, causing TRPA1 activation. As to expression, expressed in inner ear (at protein level). Specifically expressed in a subset of nociceptive neurons. Expressed in the same neurons that TRPV1. In contrast, it is not expressed in neurons expressing TRPM8. Expressed in the superior cervical ganglion of vagus nerve. Expressed in the inferior ganglion (nodose ganglion) of vagus nerve. Expressed in dorsal root ganglia neurons.

It localises to the cell membrane. The enzyme catalyses Ca(2+)(in) = Ca(2+)(out). It carries out the reaction Mg(2+)(in) = Mg(2+)(out). The catalysed reaction is Na(+)(in) = Na(+)(out). It catalyses the reaction K(+)(in) = K(+)(out). The enzyme catalyses Zn(2+)(in) = Zn(2+)(out). Its activity is regulated as follows. Electrophilic ligands activate the channel by covalent modification of intracellular cysteines. Cys-622 plays a key role in covalent binding of electrophiles. Extracellular Ca(2+) both potentiates and inactivates TRPA1; a rapid potentiation follows by slow desensitization. Activated by increase in intracellular Ca(2+) concentration. Inhibited by the potent blocker of TRPV channels ruthenium red, A-967079. Activated by icilin, sulfhydryl reactive agent MTSEA, N-methyl maleimide (NMM), and PF-4840154. Also activated by hyperoxia. Activated by intracellular Zn(2+). TRPA1 activation may critically depend on the presence of small intracellular compounds such as polyphosphates. Functionally, ligand-activated Ca(2+)-permeable, nonselective cation channel. Involved in pain detection and possibly also in cold perception, oxygen concentration perception, cough, itch, and inner ear function. Has a relatively high Ca(2+) selectivity, with a preference for divalent over monovalent cations (Ca(2+) &gt; Ba(2+) &gt; Mg(2+) &gt; NH4(+) &gt; Li(+) &gt; K(+)), the influx of cation into the cytoplasm, leads to membrane depolarization. Has a central role in the pain response to endogenous inflammatory mediators, such as bradykinin and to a diverse array of irritants. Activated by a large variety of structurally unrelated electrophilic and non-electrophilic chemical compounds, such as allylthiocyanate (AITC) from mustard oil or wasabi, cinnamaldehyde, diallyl disulfide (DADS) from garlic, and acrolein, an environmental irritant. Electrophilic ligands activate TRPA1 by interacting with critical N-terminal Cys residues in a covalent manner. Non-electrophile agonists bind at distinct sites in the transmembrane domain to promote channel activation. Also acts as an ionotropic cannabinoid receptor by being activated by delta(9)-tetrahydrocannabinol (THC), the psychoactive component of marijuana. May be a component for the mechanosensitive transduction channel of hair cells in inner ear, thereby participating in the perception of sounds. The chain is Transient receptor potential cation channel subfamily A member 1 from Mus musculus (Mouse).